Consider the following 207-residue polypeptide: Large ribosomal subunit protein uL4 (207 aa).

The tract at residues 49-73 is disordered; sequence AKKRGEVSGGGKKPWKQKGGGRARA.

This sequence belongs to the universal ribosomal protein uL4 family. In terms of assembly, part of the 50S ribosomal subunit.

Its function is as follows. One of the primary rRNA binding proteins, this protein initially binds near the 5'-end of the 23S rRNA. It is important during the early stages of 50S assembly. It makes multiple contacts with different domains of the 23S rRNA in the assembled 50S subunit and ribosome. Functionally, forms part of the polypeptide exit tunnel. This is Large ribosomal subunit protein uL4 from Helicobacter hepaticus (strain ATCC 51449 / 3B1).